The following is a 160-amino-acid chain: Putative NrdI-like protein (160 aa).

The protein belongs to the NrdI family.

The polypeptide is Putative NrdI-like protein (Streptococcus pyogenes serotype M1).